Reading from the N-terminus, the 213-residue chain is Holliday junction branch migration complex subunit RuvA (213 aa).

The segment at Met-1–Ala-63 is domain I. The interval Asp-64–Ala-140 is domain II. The interval Ala-140 to Ala-144 is flexible linker. The tract at residues Ala-145 to Gly-213 is domain III.

It belongs to the RuvA family. As to quaternary structure, homotetramer. Forms an RuvA(8)-RuvB(12)-Holliday junction (HJ) complex. HJ DNA is sandwiched between 2 RuvA tetramers; dsDNA enters through RuvA and exits via RuvB. An RuvB hexamer assembles on each DNA strand where it exits the tetramer. Each RuvB hexamer is contacted by two RuvA subunits (via domain III) on 2 adjacent RuvB subunits; this complex drives branch migration. In the full resolvosome a probable DNA-RuvA(4)-RuvB(12)-RuvC(2) complex forms which resolves the HJ.

It is found in the cytoplasm. The RuvA-RuvB-RuvC complex processes Holliday junction (HJ) DNA during genetic recombination and DNA repair, while the RuvA-RuvB complex plays an important role in the rescue of blocked DNA replication forks via replication fork reversal (RFR). RuvA specifically binds to HJ cruciform DNA, conferring on it an open structure. The RuvB hexamer acts as an ATP-dependent pump, pulling dsDNA into and through the RuvAB complex. HJ branch migration allows RuvC to scan DNA until it finds its consensus sequence, where it cleaves and resolves the cruciform DNA. This Pseudarthrobacter chlorophenolicus (strain ATCC 700700 / DSM 12829 / CIP 107037 / JCM 12360 / KCTC 9906 / NCIMB 13794 / A6) (Arthrobacter chlorophenolicus) protein is Holliday junction branch migration complex subunit RuvA.